We begin with the raw amino-acid sequence, 72 residues long: MAKEDVIEIEGKVVETMPNAMFTVELENGHQILATVSGKIRKNYIRILVGDRVTVEMSPYDLTRGRITYRFK.

The region spanning 1 to 72 (MAKEDVIEIE…TRGRITYRFK (72 aa)) is the S1-like domain.

This sequence belongs to the IF-1 family. In terms of assembly, component of the 30S ribosomal translation pre-initiation complex which assembles on the 30S ribosome in the order IF-2 and IF-3, IF-1 and N-formylmethionyl-tRNA(fMet); mRNA recruitment can occur at any time during PIC assembly.

It is found in the cytoplasm. One of the essential components for the initiation of protein synthesis. Stabilizes the binding of IF-2 and IF-3 on the 30S subunit to which N-formylmethionyl-tRNA(fMet) subsequently binds. Helps modulate mRNA selection, yielding the 30S pre-initiation complex (PIC). Upon addition of the 50S ribosomal subunit IF-1, IF-2 and IF-3 are released leaving the mature 70S translation initiation complex. This chain is Translation initiation factor IF-1, found in Streptococcus agalactiae serotype Ia (strain ATCC 27591 / A909 / CDC SS700).